The primary structure comprises 272 residues: Regulatory factor X-associated protein (272 aa).

3 disordered regions span residues 1–20 (MEAQ…GVPH), 74–142 (LCEG…KTCT), and 175–195 (KKKK…GSAG). A compositionally biased stretch (acidic residues) spans 79–94 (GDGEEEAGEDEADLLD). The Nuclear localization signal motif lies at 163 to 178 (KKHRNKMYKDKYKKKK). A Glycyl lysine isopeptide (Lys-Gly) (interchain with G-Cter in SUMO2) cross-link involves residue K198. The segment at 214–270 (TGSFGDRPARPTLLEQVLNQKRLSLLRSPEVVQFLQKQQQLLNQQVLEQRQQQFPGT) is C-terminal domain.

As to quaternary structure, the RFX heterotetrameric complex consists of 2 molecules of RFX5 and one each of RFXAP and RFX-B/RFXANK; with each subunit representing a separate complementation group. RFX forms cooperative DNA binding complexes with X2BP and CBF/NF-Y. RFX associates with CIITA to form an active transcriptional complex. Post-translationally, phosphorylated. As to expression, ubiquitous.

The protein resides in the nucleus. Its function is as follows. Part of the RFX complex that binds to the X-box of MHC II promoters. This is Regulatory factor X-associated protein (RFXAP) from Homo sapiens (Human).